The chain runs to 562 residues: Arf-GAP domain and FG repeat-containing protein 1 (562 aa).

In terms of domain architecture, Arf-GAP spans 11–135 (EKHLKMLRDM…WYVPPEQAKV (125 aa)). The C4-type zinc-finger motif lies at 29–52 (CFDCDQRGPTYVNMTVGSFVCTSC). At S167 the chain carries Phosphoserine. The tract at residues 168 to 194 (APALHLNKGTPSQSPVVGRSQAQQQEK) is disordered. Residues 176–191 (GTPSQSPVVGRSQAQQ) are compositionally biased toward polar residues. T177 carries the phosphothreonine modification. A phosphoserine mark is found at S181 and S362. S367 carries O-linked (GlcNAc) serine glycosylation.

As to quaternary structure, interacts with EPS15R and EPS15. Interacts with FCHO1. In terms of processing, O-glycosylated.

It is found in the nucleus. The protein localises to the cytoplasmic vesicle. Its function is as follows. Required for vesicle docking or fusion during acrosome biogenesis. May play a role in RNA trafficking or localization. The sequence is that of Arf-GAP domain and FG repeat-containing protein 1 (AGFG1) from Bos taurus (Bovine).